The primary structure comprises 132 residues: Inclusion membrane protein E (132 aa).

2 helical membrane-spanning segments follow: residues 41-61 (LGVVCSIICLALGIAAAAVGV) and 66-86 (FALGLGIIAILLGIVLFATSA).

It is found in the secreted. Its subcellular location is the host vacuole. The protein resides in the host pathogen-containing vacuole. The protein localises to the host pathogen-containing vacuole membrane. Inclusion membrane protein probably involved in early modification events of the chlamydial inclusion. This chain is Inclusion membrane protein E, found in Chlamydia trachomatis serovar L2 (strain ATCC VR-902B / DSM 19102 / 434/Bu).